Here is a 621-residue protein sequence, read N- to C-terminus: (-)-beta-phellandrene synthase 1, chloroplastic (621 aa).

The N-terminal 49 residues, 1–49 (MALALVSVAPLVSMRRSLFSSPYELKSIDKTIPNLVMCRKRMSGTPSIR), are a transit peptide targeting the chloroplast. Asp372, Asp376, and Asp524 together coordinate Mg(2+). Positions 372 to 376 (DDIYD) match the DDXXD motif motif.

Belongs to the terpene synthase family. Tpsd subfamily. Requires Mg(2+) as cofactor. The cofactor is Mn(2+).

The protein localises to the plastid. It is found in the chloroplast. It carries out the reaction (2E)-geranyl diphosphate = (-)-beta-phellandrene + diphosphate. Its pathway is terpene metabolism; oleoresin biosynthesis. The protein operates within secondary metabolite biosynthesis; terpenoid biosynthesis. Its function is as follows. Monoterpene synthase (TPS) involved in the biosynthesis of monoterpene natural products included in conifer oleoresin secretions and volatile emissions; these compounds contribute to biotic and abiotic stress defense against herbivores and pathogens. Catalyzes the conversion of (2E)-geranyl diphosphate (GPP) to (-)-beta-phellandrene and, to a lower extent, to (-)-alpha-phellandrene. This Pinus contorta (Shore pine) protein is (-)-beta-phellandrene synthase 1, chloroplastic.